A 614-amino-acid polypeptide reads, in one-letter code: Dihydroxy-acid dehydratase (614 aa).

Asp-81 lines the Mg(2+) pocket. Cys-122 is a binding site for [2Fe-2S] cluster. Residues Asp-123 and Lys-124 each contribute to the Mg(2+) site. N6-carboxylysine is present on Lys-124. Residue Cys-193 coordinates [2Fe-2S] cluster. Glu-489 is a binding site for Mg(2+). The Proton acceptor role is filled by Ser-515.

This sequence belongs to the IlvD/Edd family. As to quaternary structure, homodimer. The cofactor is [2Fe-2S] cluster. Mg(2+) is required as a cofactor.

The enzyme catalyses (2R)-2,3-dihydroxy-3-methylbutanoate = 3-methyl-2-oxobutanoate + H2O. It carries out the reaction (2R,3R)-2,3-dihydroxy-3-methylpentanoate = (S)-3-methyl-2-oxopentanoate + H2O. Its pathway is amino-acid biosynthesis; L-isoleucine biosynthesis; L-isoleucine from 2-oxobutanoate: step 3/4. It participates in amino-acid biosynthesis; L-valine biosynthesis; L-valine from pyruvate: step 3/4. Its function is as follows. Functions in the biosynthesis of branched-chain amino acids. Catalyzes the dehydration of (2R,3R)-2,3-dihydroxy-3-methylpentanoate (2,3-dihydroxy-3-methylvalerate) into 2-oxo-3-methylpentanoate (2-oxo-3-methylvalerate) and of (2R)-2,3-dihydroxy-3-methylbutanoate (2,3-dihydroxyisovalerate) into 2-oxo-3-methylbutanoate (2-oxoisovalerate), the penultimate precursor to L-isoleucine and L-valine, respectively. In Hahella chejuensis (strain KCTC 2396), this protein is Dihydroxy-acid dehydratase.